A 240-amino-acid chain; its full sequence is Putative outer membrane protein RT0057 (240 aa).

An N-terminal signal peptide occupies residues 1-20; the sequence is MLKKLCVILFISSITINSHA.

The protein belongs to the OmpW/AlkL family.

The protein localises to the cell outer membrane. The polypeptide is Putative outer membrane protein RT0057 (Rickettsia typhi (strain ATCC VR-144 / Wilmington)).